The sequence spans 88 residues: Small ribosomal subunit protein uS17 (88 aa).

The protein belongs to the universal ribosomal protein uS17 family. In terms of assembly, part of the 30S ribosomal subunit.

Functionally, one of the primary rRNA binding proteins, it binds specifically to the 5'-end of 16S ribosomal RNA. The protein is Small ribosomal subunit protein uS17 of Ectopseudomonas mendocina (strain ymp) (Pseudomonas mendocina).